The primary structure comprises 445 residues: MRYHPHTPDDVRAMLDVVGAERVDDLFRSIPQALRLDRPLDLPPAADEIALFSELRRLAARNETAHPPFVGAGCYPHHVPPVVDQLLLRGEFFTAYTPYQPEISQGTLQALFEWQTFVCLLTGMDVSNASMYDGATATAEAALMAGRITGRDKVVVSAALHPEYRKVLATYLRSTGDEIVTVPFGADGRTDLAALAQAVDGRTACVILGYPNFLGVVDALPEAAALARAAGALTVAATAEAVSLGLLQAPGALGADVAVGTFQSFGNPMSFGGPAPGFFATREKSLRQMPGRVAGATVDKQGRRGFVLTLSTREQHIRREKATSNICTNSGLCALASTIHLSLLGKRGLAELARLNHGRARMLRDAMERAGCRPVFSGPYFNEQVFDVGDAEAVVAKLAKRGIVAGAPLARWYPDAPHAKGALLCAATELHGPELIQLFASTVRS.

It belongs to the GcvP family. N-terminal subunit subfamily. The glycine cleavage system is composed of four proteins: P, T, L and H. In this organism, the P 'protein' is a heterodimer of two subunits.

It carries out the reaction N(6)-[(R)-lipoyl]-L-lysyl-[glycine-cleavage complex H protein] + glycine + H(+) = N(6)-[(R)-S(8)-aminomethyldihydrolipoyl]-L-lysyl-[glycine-cleavage complex H protein] + CO2. In terms of biological role, the glycine cleavage system catalyzes the degradation of glycine. The P protein binds the alpha-amino group of glycine through its pyridoxal phosphate cofactor; CO(2) is released and the remaining methylamine moiety is then transferred to the lipoamide cofactor of the H protein. The chain is Probable glycine dehydrogenase (decarboxylating) subunit 1 from Anaeromyxobacter dehalogenans (strain 2CP-1 / ATCC BAA-258).